The following is a 182-amino-acid chain: ATP-dependent protease subunit HslV (182 aa).

Threonine 12 is an active-site residue. Na(+) is bound by residues alanine 167, cysteine 170, and threonine 173.

Belongs to the peptidase T1B family. HslV subfamily. As to quaternary structure, a double ring-shaped homohexamer of HslV is capped on each side by a ring-shaped HslU homohexamer. The assembly of the HslU/HslV complex is dependent on binding of ATP.

Its subcellular location is the cytoplasm. It carries out the reaction ATP-dependent cleavage of peptide bonds with broad specificity.. Its activity is regulated as follows. Allosterically activated by HslU binding. Protease subunit of a proteasome-like degradation complex believed to be a general protein degrading machinery. This Chlorobium phaeobacteroides (strain BS1) protein is ATP-dependent protease subunit HslV.